A 182-amino-acid chain; its full sequence is CASP-like protein 2B1 (182 aa).

Residues 1 to 12 (MKLIDRRMRLTE) lie on the Cytoplasmic side of the membrane. A helical membrane pass occupies residues 13-31 (LLLRCSISVFALLALILVV). Over 32 to 52 (TDTEVKLIFTIKKTAKYTDMK) the chain is Extracellular. Residues 53 to 73 (AVVFLVVANGIAAVYSLLQSV) form a helical membrane-spanning segment. The Cytoplasmic portion of the chain corresponds to 74-89 (RCVVGTMKGRVLFSKP). The chain crosses the membrane as a helical span at residues 90 to 110 (LAWAFFSGDQAMAYLNVAAIA). The Extracellular portion of the chain corresponds to 111 to 141 (ATAESGVIAREGEEDLQWMRVCNMYGKFCNQ). The chain crosses the membrane as a helical span at residues 142-162 (MAIGVSSALLASIAMVFVSCI). At 163–182 (SAFSLFRLYGATRDRRTTPW) the chain is on the cytoplasmic side.

This sequence belongs to the Casparian strip membrane proteins (CASP) family. Homodimer and heterodimers.

The protein resides in the cell membrane. This Arabidopsis lyrata subsp. lyrata (Lyre-leaved rock-cress) protein is CASP-like protein 2B1.